A 167-amino-acid polypeptide reads, in one-letter code: MVFKTLRRTLWLTLAALLAVFQFNLGAAQAAELTAETRTVKLNPQGDNVTLSLKQVAEGKQLFAYACGQCHVGGITKTDPNVGLDPEALALATPPRDSVESLVDYLHNPTTYDGEREISELHPSTKSTDIFPKMRNLTEDDLVAISGHILLQPKIVGTKWGGGKIYY.

Positions Met1–Ala30 are cleaved as a signal peptide. 4 residues coordinate heme c: Cys67, Cys70, His71, and His122.

It belongs to the cytochrome c family. PsbV subfamily. In terms of assembly, PSII is composed of 1 copy each of membrane proteins PsbA, PsbB, PsbC, PsbD, PsbE, PsbF, PsbH, PsbI, PsbJ, PsbK, PsbL, PsbM, PsbT, PsbX, PsbY, PsbZ, Psb30/Ycf12, peripheral proteins PsbO, CyanoQ (PsbQ), PsbU, PsbV and a large number of cofactors. It forms dimeric complexes. It depends on heme c as a cofactor.

It localises to the cellular thylakoid membrane. One of the extrinsic, lumenal subunits of photosystem II (PSII). PSII is a light-driven water plastoquinone oxidoreductase, using light energy to abstract electrons from H(2)O, generating a proton gradient subsequently used for ATP formation. The extrinsic proteins stabilize the structure of photosystem II oxygen-evolving complex (OEC), the ion environment of oxygen evolution and protect the OEC against heat-induced inactivation. Low-potential cytochrome c that plays a role in the OEC of PSII. This chain is Photosystem II extrinsic protein V, found in Synechococcus elongatus (strain ATCC 33912 / PCC 7942 / FACHB-805) (Anacystis nidulans R2).